We begin with the raw amino-acid sequence, 367 residues long: GTP cyclohydrolase FolE2 (367 aa).

The protein belongs to the GTP cyclohydrolase IV family.

It carries out the reaction GTP + H2O = 7,8-dihydroneopterin 3'-triphosphate + formate + H(+). Its pathway is cofactor biosynthesis; 7,8-dihydroneopterin triphosphate biosynthesis; 7,8-dihydroneopterin triphosphate from GTP: step 1/1. Converts GTP to 7,8-dihydroneopterin triphosphate. This Ruegeria pomeroyi (strain ATCC 700808 / DSM 15171 / DSS-3) (Silicibacter pomeroyi) protein is GTP cyclohydrolase FolE2.